A 91-amino-acid chain; its full sequence is Small ribosomal subunit protein uS19 (91 aa).

This sequence belongs to the universal ribosomal protein uS19 family.

Protein S19 forms a complex with S13 that binds strongly to the 16S ribosomal RNA. In Methylacidiphilum infernorum (isolate V4) (Methylokorus infernorum (strain V4)), this protein is Small ribosomal subunit protein uS19.